Reading from the N-terminus, the 97-residue chain is YcgL domain-containing protein Maqu_1609 (97 aa).

One can recognise a YcgL domain in the interval 5–89; sequence EFVSVFRSSK…EQDTYIVDFK (85 aa).

This Marinobacter nauticus (strain ATCC 700491 / DSM 11845 / VT8) (Marinobacter aquaeolei) protein is YcgL domain-containing protein Maqu_1609.